Here is a 102-residue protein sequence, read N- to C-terminus: MTSSSSPSSSSSKCSNGASVCFIPKEWNDYPTSTLECVLTTDIKEHMKNYNEVVGAPISVGGVSAKLEFFGPNIWMRKDGDEKSKPNSKDYASRPIRDHSKI.

Residues 77–102 (RKDGDEKSKPNSKDYASRPIRDHSKI) are disordered.

This is an uncharacterized protein from Microplitis demolitor (Parasitoid wasp).